Reading from the N-terminus, the 114-residue chain is Iron-sulfur cluster insertion protein ErpA (114 aa).

Iron-sulfur cluster-binding residues include Cys-42, Cys-106, and Cys-108.

It belongs to the HesB/IscA family. In terms of assembly, homodimer. Iron-sulfur cluster serves as cofactor.

Functionally, required for insertion of 4Fe-4S clusters for at least IspG. The polypeptide is Iron-sulfur cluster insertion protein ErpA (Pseudoalteromonas atlantica (strain T6c / ATCC BAA-1087)).